The sequence spans 390 residues: Peroxisomal sarcosine oxidase (390 aa).

9–39 (DAIVIGAGIQGCFTAYHLAKHSKSVLLLEQF) provides a ligand contact to FAD. N6-acetyllysine is present on residues Lys-126 and Lys-287. Cys-319 is subject to S-8alpha-FAD cysteine. Residues 388–390 (AHL) carry the Microbody targeting signal motif.

The protein belongs to the MSOX/MTOX family. Requires FAD as cofactor. Kidney and liver.

The protein resides in the peroxisome. It catalyses the reaction sarcosine + O2 + H2O = formaldehyde + glycine + H2O2. The catalysed reaction is L-pipecolate + O2 = L-1-piperideine-6-carboxylate + H2O2 + H(+). Its function is as follows. Metabolizes sarcosine, L-pipecolic acid and L-proline. This is Peroxisomal sarcosine oxidase (Pipox) from Mus musculus (Mouse).